The primary structure comprises 511 residues: Ectonucleoside triphosphate diphosphohydrolase 1 (511 aa).

Over 1 to 16 (MEDIKDSKVKRFCSKN) the chain is Cytoplasmic. A helical membrane pass occupies residues 17 to 37 (ILIILGFSSVLAVIALIAVGL). Topologically, residues 38–478 (THNKPLPENV…LSPPLPHSTY (441 aa)) are extracellular. The interval 46 to 171 (NVKYGIVLDA…DFQGAKIITG (126 aa)) is N-terminal lobe. Residue asparagine 73 is glycosylated (N-linked (GlcNAc...) asparagine). A disulfide bond links cysteine 84 and cysteine 108. Glutamate 174 (proton acceptor) is an active-site residue. A C-terminal lobe region spans residues 205–441 (QATFGALDLG…GTSWDQIHFM (237 aa)). 3 N-linked (GlcNAc...) asparagine glycosylation sites follow: asparagine 226, asparagine 291, and asparagine 333. Intrachain disulfides connect cysteine 254–cysteine 300 and cysteine 281–cysteine 324. The cysteines at positions 337 and 342 are disulfide-linked. Asparagine 374 carries an N-linked (GlcNAc...) asparagine glycan. Cysteine 391 and cysteine 414 form a disulfide bridge. N-linked (GlcNAc...) asparagine glycosylation is found at asparagine 429 and asparagine 458. The helical transmembrane segment at 479-499 (ISLMVLFSLVLVAMVITGLFI) threads the bilayer. Residues 500-511 (FSKPSYFWKEAV) are Cytoplasmic-facing.

The protein belongs to the GDA1/CD39 NTPase family. Homodimer; disulfide-linked. The cofactor is Ca(2+). It depends on Mg(2+) as a cofactor. N-glycosylated. In terms of processing, the N-terminus is blocked. Post-translationally, palmitoylated on Cys-13; which is required for caveola targeting. In terms of tissue distribution, expressed in primary neurons and astrocytes, kidney, liver, muscle, thymus, lung and spleen.

It is found in the membrane. It localises to the caveola. It catalyses the reaction a ribonucleoside 5'-triphosphate + 2 H2O = a ribonucleoside 5'-phosphate + 2 phosphate + 2 H(+). It carries out the reaction a ribonucleoside 5'-triphosphate + H2O = a ribonucleoside 5'-diphosphate + phosphate + H(+). The enzyme catalyses a ribonucleoside 5'-diphosphate + H2O = a ribonucleoside 5'-phosphate + phosphate + H(+). The catalysed reaction is ATP + 2 H2O = AMP + 2 phosphate + 2 H(+). It catalyses the reaction ATP + H2O = ADP + phosphate + H(+). It carries out the reaction ADP + H2O = AMP + phosphate + H(+). The enzyme catalyses CTP + 2 H2O = CMP + 2 phosphate + 2 H(+). The catalysed reaction is CTP + H2O = CDP + phosphate + H(+). It catalyses the reaction CDP + H2O = CMP + phosphate + H(+). It carries out the reaction GTP + 2 H2O = GMP + 2 phosphate + 2 H(+). The enzyme catalyses GTP + H2O = GDP + phosphate + H(+). The catalysed reaction is GDP + H2O = GMP + phosphate + H(+). It catalyses the reaction ITP + 2 H2O = IMP + 2 phosphate + 2 H(+). It carries out the reaction ITP + H2O = IDP + phosphate + H(+). The enzyme catalyses IDP + H2O = IMP + phosphate + H(+). The catalysed reaction is UTP + 2 H2O = UMP + 2 phosphate + 2 H(+). It catalyses the reaction UTP + H2O = UDP + phosphate + H(+). It carries out the reaction UDP + H2O = UMP + phosphate + H(+). Functionally, catalyzes the hydrolysis of both di- and triphosphate nucleotides (NDPs and NTPs) and hydrolyze NTPs to nucleotide monophosphates (NMPs) in two distinct successive phosphate-releasing steps, with NDPs as intermediates and participates in the regulation of extracellular levels of nucleotides. By hydrolyzing proinflammatory ATP and platelet-activating ADP to AMP, it blocks platelet aggregation and supports blood flow. The sequence is that of Ectonucleoside triphosphate diphosphohydrolase 1 from Rattus norvegicus (Rat).